The following is a 349-amino-acid chain: Ribosomal RNA small subunit methyltransferase H 2 (349 aa).

Residues 80 to 82 (GGH), D100, F130, D149, and Q156 contribute to the S-adenosyl-L-methionine site.

Belongs to the methyltransferase superfamily. RsmH family.

The protein localises to the cytoplasm. It carries out the reaction cytidine(1402) in 16S rRNA + S-adenosyl-L-methionine = N(4)-methylcytidine(1402) in 16S rRNA + S-adenosyl-L-homocysteine + H(+). Its function is as follows. Specifically methylates the N4 position of cytidine in position 1402 (C1402) of 16S rRNA. The chain is Ribosomal RNA small subunit methyltransferase H 2 from Alkaliphilus metalliredigens (strain QYMF).